The sequence spans 148 residues: Ribonuclease 4 (148 aa).

The signal sequence occupies residues 1–29 (MMDLQRTQSLLLLLVLTLLGLGLVQPSYG). Residue Gln30 is modified to Pyrrolidone carboxylic acid. 5 residues coordinate dUMP: Arg36, His41, Lys69, Asn72, and Thr73. The active-site Proton acceptor is His41. Disulfide bonds link Cys54–Cys110, Cys68–Cys121, Cys86–Cys136, and Cys93–Cys100. His145 acts as the Proton donor in catalysis. Phe146 contributes to the dUMP binding site.

This sequence belongs to the pancreatic ribonuclease family. Expressed in the cortical tubules of the kidney (at protein level). Also expressed in the medullary tubules of the kidney.

It localises to the secreted. In terms of biological role, cleaves preferentially after uridine bases. Has antimicrobial activity against uropathogenic E.coli (UPEC). Probably contributes to urinary tract sterility. This chain is Ribonuclease 4 (Rnase4), found in Mus musculus (Mouse).